We begin with the raw amino-acid sequence, 1398 residues long: Pyrolysin (1398 aa).

The signal sequence occupies residues 1 to 26 (MNKKGLTVLFIAIMLLSVVPVHFVSA). The propeptide occupies 27–149 (GTPPVSSENS…KTKEPSLEPK (123 aa)). N-linked (GlcNAc...) asparagine glycosylation is present at asparagine 152. Residues 154–656 (TWVINALQFI…HGLVNVTKSW (503 aa)) form the Peptidase S8 domain. Residue aspartate 179 is the Charge relay system of the active site. N-linked (GlcNAc...) asparagine glycosylation is found at asparagine 222, asparagine 228, asparagine 240, asparagine 257, asparagine 262, asparagine 298, and asparagine 327. Residue histidine 365 is the Charge relay system of the active site. Asparagine 406 carries an N-linked (GlcNAc...) asparagine glycan. The active-site Charge relay system is serine 590. Asparagine 651, asparagine 663, asparagine 739, asparagine 792, asparagine 893, asparagine 908, asparagine 917, asparagine 929, asparagine 1048, asparagine 1056, asparagine 1084, asparagine 1117, asparagine 1133, asparagine 1140, asparagine 1148, asparagine 1208, asparagine 1233, asparagine 1237, and asparagine 1332 each carry an N-linked (GlcNAc...) asparagine glycan.

The protein belongs to the peptidase S8 family. In terms of processing, LWM pyrolysin seems to be produced by autoproteolytic activation of HMW pyrolysin. Glycosylated.

The protein resides in the cell envelope. Its function is as follows. Has endopeptidase activity toward caseins, casein fragments including alpha-S1-casein and synthetic peptides. The polypeptide is Pyrolysin (pls) (Pyrococcus furiosus (strain ATCC 43587 / DSM 3638 / JCM 8422 / Vc1)).